Here is a 326-residue protein sequence, read N- to C-terminus: Cytosolic sulfotransferase 12 (326 aa).

Residue 75–80 (KSGTTW) participates in 3'-phosphoadenylyl sulfate binding. Catalysis depends on His-140, which acts as the Proton acceptor. 3'-phosphoadenylyl sulfate contacts are provided by residues Arg-162, Ser-170, Tyr-228, and 290 to 292 (RKG).

Belongs to the sulfotransferase 1 family. Dimer. As to expression, expressed in the aerial parts of seedlings, in roots, leaves and flowers. Not detected in stems and siliques.

The protein resides in the cytoplasm. Its function is as follows. Sulfotransferase that utilizes 3'-phospho-5'-adenylyl sulfate (PAPS) as sulfonate donor to catalyze the stereospecific sulfate conjugation of 24-epibrassinosteroids. Preferred substrates are 24-epicathasterone and 6-deoxo-24-epicathasterone. Low activity with 22-deoxy-24-epiteasterone. No activity with 24-epimers catasterone and brassinolide. Sulfonates salicylic acid. May be involved in detoxification. Enhances plant response to pathogen infection and contributes to long distance signaling in systemic acquired resistance (SAR). The sequence is that of Cytosolic sulfotransferase 12 (SOT12) from Arabidopsis thaliana (Mouse-ear cress).